Reading from the N-terminus, the 591-residue chain is MASLCSNSSTTSLKTPFTSLGSTPKPCQLFLHGKRNKAFKVSCKVTNTNGNQDETNSVDRRNVLLGLGGLYGVANAIPLAASAAPTPPPDLSSCSIARIDENQVVSYSCCAPKPDDMEKVPYYKFPSMTKLRVRQPAHEADEEYIAKYNVSVTKMRDLDKTQPLNPIGFKQQANIHCAYCNGAYRIGGKELQVHNSWLFFPFHRWYLYFYESNAGKLIDDPTFALPYWNWDHPKGMRFPAMYDREGTFLFDETRDQSHRNGTVIDLGFFGNEVETTQLQMMSNNLTLMYRQMVTNAPCPRMFFGDLMISGITLNSPGTIENIPHGPVHIWSGTVRGSTLPNGAISKRGEYGHFYSAGLDPVFFCHHSNVDRMWSEWKATGGKRTDITHKDWLNSEFFFYDENENPYRVKVRDCLDTKKMGYDYKPMRTPWRNFKPLTKASAGKVNTSSIPPVSQAFPLAKLDKAVSFSINRPTSSRTPQEKNAQEEMLTFNSIRYDNRGYIRFDVFLNVDNNVNANELDKAEFAGSYTSLPHVHRAGETNHIATVDFQLAITELLEDIGLEDEDTIAVTLVPKRGGEGISIENATISLADC.

The transit peptide at 1–83 (MASLCSNSST…ANAIPLAASA (83 aa)) directs the protein to the chloroplast. 2 disulfide bridges follow: cysteine 94–cysteine 110 and cysteine 109–cysteine 177. Cu cation contacts are provided by histidine 176, histidine 194, histidine 203, histidine 324, histidine 328, and histidine 366. Positions 180 to 194 (CNGAYRIGGKELQVH) form a cross-link, 2'-(S-cysteinyl)-histidine (Cys-His).

Belongs to the tyrosinase family. Cu(2+) is required as a cofactor.

It localises to the plastid. The protein resides in the chloroplast thylakoid lumen. It catalyses the reaction 2 catechol + O2 = 2 1,2-benzoquinone + 2 H2O. Catalyzes the oxidation of mono- and o-diphenols to o-diquinones. The chain is Polyphenol oxidase D, chloroplastic from Solanum lycopersicum (Tomato).